The chain runs to 255 residues: Octanoyltransferase (255 aa).

The disordered stretch occupies residues Met-1–Ala-21. Residues Phe-56–Pro-242 form the BPL/LPL catalytic domain. Substrate is bound by residues Arg-96–His-103, Ala-173–Gly-175, and Gly-186–Ser-188. Residue Cys-204 is the Acyl-thioester intermediate of the active site.

Belongs to the LipB family.

The protein resides in the cytoplasm. It carries out the reaction octanoyl-[ACP] + L-lysyl-[protein] = N(6)-octanoyl-L-lysyl-[protein] + holo-[ACP] + H(+). It participates in protein modification; protein lipoylation via endogenous pathway; protein N(6)-(lipoyl)lysine from octanoyl-[acyl-carrier-protein]: step 1/2. Its function is as follows. Catalyzes the transfer of endogenously produced octanoic acid from octanoyl-acyl-carrier-protein onto the lipoyl domains of lipoate-dependent enzymes. Lipoyl-ACP can also act as a substrate although octanoyl-ACP is likely to be the physiological substrate. This is Octanoyltransferase from Paraburkholderia phymatum (strain DSM 17167 / CIP 108236 / LMG 21445 / STM815) (Burkholderia phymatum).